The following is a 351-amino-acid chain: Probable glucuronosyltransferase Os10g0205300 (351 aa).

Residues 1–11 lie on the Cytoplasmic side of the membrane; it reads MAAPPCPPRRP. Residues 12–32 form a helical; Signal-anchor for type II membrane protein membrane-spanning segment; sequence ISAPCFLLCFLLGFVAGLFPF. Topologically, residues 33-351 are lumenal; sequence AHRHLHLDLH…PLKKEARPLL (319 aa). Positions 138–169 are disordered; sequence SSPVPDAPQDRPRRRGRRQDRPAVDSRARQRN. The segment covering 156–169 has biased composition (basic and acidic residues); it reads QDRPAVDSRARQRN. Residue Asn259 is glycosylated (N-linked (GlcNAc...) asparagine).

Belongs to the glycosyltransferase 43 family.

Its subcellular location is the golgi apparatus membrane. In terms of biological role, involved in the synthesis of glucuronoxylan hemicellulose in secondary cell walls. This is Probable glucuronosyltransferase Os10g0205300 from Oryza sativa subsp. japonica (Rice).